The sequence spans 320 residues: Lipoyl synthase (320 aa).

[4Fe-4S] cluster-binding residues include C67, C72, C78, C93, C97, C100, and S307. Residues 79 to 296 (FNHGTATFMI…RDKANEMGFE (218 aa)) enclose the Radical SAM core domain.

It belongs to the radical SAM superfamily. Lipoyl synthase family. [4Fe-4S] cluster serves as cofactor.

It localises to the cytoplasm. The enzyme catalyses [[Fe-S] cluster scaffold protein carrying a second [4Fe-4S](2+) cluster] + N(6)-octanoyl-L-lysyl-[protein] + 2 oxidized [2Fe-2S]-[ferredoxin] + 2 S-adenosyl-L-methionine + 4 H(+) = [[Fe-S] cluster scaffold protein] + N(6)-[(R)-dihydrolipoyl]-L-lysyl-[protein] + 4 Fe(3+) + 2 hydrogen sulfide + 2 5'-deoxyadenosine + 2 L-methionine + 2 reduced [2Fe-2S]-[ferredoxin]. It functions in the pathway protein modification; protein lipoylation via endogenous pathway; protein N(6)-(lipoyl)lysine from octanoyl-[acyl-carrier-protein]: step 2/2. Catalyzes the radical-mediated insertion of two sulfur atoms into the C-6 and C-8 positions of the octanoyl moiety bound to the lipoyl domains of lipoate-dependent enzymes, thereby converting the octanoylated domains into lipoylated derivatives. This is Lipoyl synthase from Haemophilus influenzae (strain ATCC 51907 / DSM 11121 / KW20 / Rd).